The following is a 214-amino-acid chain: Riboflavin kinase (214 aa).

The disordered stretch occupies residues 1–26; sequence MRPDGPRDPVAGPDSGPEPPYPVRLS. Mg(2+) is bound by residues threonine 44 and asparagine 46. Glutamate 116 acts as the Nucleophile in catalysis.

The protein belongs to the flavokinase family. The cofactor is Zn(2+). Mg(2+) serves as cofactor.

It carries out the reaction riboflavin + ATP = FMN + ADP + H(+). It functions in the pathway cofactor biosynthesis; FMN biosynthesis; FMN from riboflavin (ATP route): step 1/1. Its function is as follows. Catalyzes the phosphorylation of riboflavin (vitamin B2) to form flavin mononucleotide (FMN) coenzyme. The protein is Riboflavin kinase (fmn1) of Aspergillus fumigatus (strain ATCC MYA-4609 / CBS 101355 / FGSC A1100 / Af293) (Neosartorya fumigata).